A 274-amino-acid chain; its full sequence is 2,3,4,5-tetrahydropyridine-2,6-dicarboxylate N-succinyltransferase (274 aa).

Belongs to the transferase hexapeptide repeat family.

It is found in the cytoplasm. The catalysed reaction is (S)-2,3,4,5-tetrahydrodipicolinate + succinyl-CoA + H2O = (S)-2-succinylamino-6-oxoheptanedioate + CoA. The protein operates within amino-acid biosynthesis; L-lysine biosynthesis via DAP pathway; LL-2,6-diaminopimelate from (S)-tetrahydrodipicolinate (succinylase route): step 1/3. This Shigella boydii serotype 18 (strain CDC 3083-94 / BS512) protein is 2,3,4,5-tetrahydropyridine-2,6-dicarboxylate N-succinyltransferase.